A 187-amino-acid chain; its full sequence is Potassium-transporting ATPase KdpC subunit (187 aa).

A helical membrane pass occupies residues 10–30 (LVAATMLICVAGYSAAVWAVG).

Belongs to the KdpC family. In terms of assembly, the system is composed of three essential subunits: KdpA, KdpB and KdpC.

It localises to the cell inner membrane. Functionally, part of the high-affinity ATP-driven potassium transport (or Kdp) system, which catalyzes the hydrolysis of ATP coupled with the electrogenic transport of potassium into the cytoplasm. This subunit acts as a catalytic chaperone that increases the ATP-binding affinity of the ATP-hydrolyzing subunit KdpB by the formation of a transient KdpB/KdpC/ATP ternary complex. In Parvibaculum lavamentivorans (strain DS-1 / DSM 13023 / NCIMB 13966), this protein is Potassium-transporting ATPase KdpC subunit.